The primary structure comprises 350 residues: Cytochrome c biogenesis protein CcsA (350 aa).

A run of 8 helical transmembrane segments spans residues 23 to 43 (NVAF…AAFP), 47 to 67 (LLAE…AALL), 82 to 102 (LYES…LALH), 108 to 128 (WVGV…ALVL), 153 to 173 (VMLL…SFLI), 258 to 278 (LIGL…VWAN), 293 to 313 (WALI…TKGW), and 319 to 339 (ALLA…VNFL).

Belongs to the CcmF/CycK/Ccl1/NrfE/CcsA family. May interact with ccs1.

The protein localises to the cellular thylakoid membrane. Functionally, required during biogenesis of c-type cytochromes (cytochrome c6 and cytochrome f) at the step of heme attachment. The polypeptide is Cytochrome c biogenesis protein CcsA (Synechococcus sp. (strain JA-2-3B'a(2-13)) (Cyanobacteria bacterium Yellowstone B-Prime)).